The chain runs to 994 residues: MERSQSQQHGGEQSWWGTAPQYQYMPFEHCTSYGLPSENGGLQHRPRKDLGPRHNAHPTQIYGHHKEQYSYQAQDRGIPKKTDSSSTVDSLDEDHYSKCQDCVHRLGRVLRRKLGEDWIFLVLLGLLMALVSWCMDYVSAKSLQAYKWTYAQMQPSLPLQYLAWVTFPLILILFSALFCQLISPQAVGSGIPEMKTILRGVVLKEYLTLKAFVAKVVALTAGLGSGIPVGKEGPFVHIASICAAVLSKFMSMFSGVYEQPYYYTDILTVGCAVGVGCCFGTPLGGVLFSIEVTSTYFAVRNYWRGFFAATFSAFVFRVLAVWNKDAVTITALFRTNFRMDFPFDLKELPAFAVIGICCGFLGAVFVYLHRQVMLGVRKHKALSQFLAKHRLLYPGIVTFVIASLTFPPGMGQFMAGELMPREAISTLFDNNTWVKHIGDPKSLGQSAVWIHPQVNVVIIILLFFVMKFWMSIVATTMPIPCGGFMPVFVLGAAFGRLVGEIMAMLFPEGILFDDIIYKILPGGYAVIGAAALTGAVSHTVSTAVICFELTGQIAHILPMMVAVILANMVAQSLQPSLYDSIIQVKKLPYLPDLGWNQLSKFTIFVEDIMVRDVKFVSASCTYGELRNLLQTTTVKTLPLVDSKDSMILLGSVERSELQSLLQRHLCAERRLKAAQDMARKLSELPYNGQAQLAGEWHPGGRPESFAFVDEDEDEDVSRKTELPQTPTPPPPPPPPLPPQFPIAPSYPEEPNGPLPSHKQPPEASDSADQRSSIFQRLLHCLLGKAHSTKKKITQDSTDLVDNMSPEEIEAWEREQLSQPVCFDFCCIDQSPFQLVEQTTLHKTHTLFSLLGLHLAYVTSMGKLRGVLALEELQKAIKGHTKSGVQLRPPLASFRNTTSIRKTPGGPPPPAESWNVPEGEDGAPEREVMVPTMPETPVPPPSPEVPSCLAPARVEGELEELEMVGNLGPEEDLADILHGPSLRSTDEEDEDELIL.

Residues 1 to 118 are Cytoplasmic-facing; sequence MERSQSQQHG…VLRRKLGEDW (118 aa). Residues 37-61 are disordered; the sequence is SENGGLQHRPRKDLGPRHNAHPTQI. Residues 119–150 form a helical membrane-spanning segment; that stretch reads IFLVLLGLLMALVSWCMDYVSAKSLQAYKWTY. The Extracellular segment spans residues 151-158; it reads AQMQPSLP. Residues 159–179 traverse the membrane as a helical segment; the sequence is LQYLAWVTFPLILILFSALFC. Residues 180–183 are Cytoplasmic-facing; that stretch reads QLIS. Residues 184–189 constitute an intramembrane region (note=Loop between two helices); it reads PQAVGS. The Selectivity filter part_1 motif lies at 188–192; that stretch reads GSGIP. Residue Ser189 participates in chloride binding. An intramembrane region (helical) is located at residues 190-195; that stretch reads GIPEMK. Residues 196-208 lie on the Cytoplasmic side of the membrane; the sequence is TILRGVVLKEYLT. An intramembrane region (helical) is located at residues 209-224; the sequence is LKAFVAKVVALTAGLG. Positions 225–230 form an intramembrane region, note=Loop between two helices; that stretch reads SGIPVG. Positions 230–234 match the Selectivity filter part_2 motif; that stretch reads GKEGP. The segment at residues 231-246 is an intramembrane region (helical); the sequence is KEGPFVHIASICAAVL. Residues 247–268 are Cytoplasmic-facing; sequence SKFMSMFSGVYEQPYYYTDILT. 2 consecutive intramembrane regions (helical) follow at residues 269–280 and 281–290; these read VGCAVGVGCCFG and TPLGGVLFSI. Over 291 to 301 the chain is Cytoplasmic; it reads EVTSTYFAVRN. Residues 302–321 traverse the membrane as a helical segment; the sequence is YWRGFFAATFSAFVFRVLAV. The Extracellular portion of the chain corresponds to 322-347; the sequence is WNKDAVTITALFRTNFRMDFPFDLKE. Residues 348–376 traverse the membrane as a helical segment; that stretch reads LPAFAVIGICCGFLGAVFVYLHRQVMLGV. The Cytoplasmic portion of the chain corresponds to 377–390; it reads RKHKALSQFLAKHR. Residues 391 to 408 form a helical membrane-spanning segment; it reads LLYPGIVTFVIASLTFPP. Residues 409–414 are Extracellular-facing; it reads GMGQFM. An intramembrane region (note=Loop between two helices) is located at residues 415 to 418; the sequence is AGEL. The helical intramembrane region spans 419-426; sequence MPREAIST. The Extracellular portion of the chain corresponds to 427–457; that stretch reads LFDNNTWVKHIGDPKSLGQSAVWIHPQVNVV. Positions 458-475 form an intramembrane region, helical; the sequence is IIILLFFVMKFWMSIVAT. The note=Loop between two helices intramembrane region spans 476–482; that stretch reads TMPIPCG. Positions 482 to 486 match the Selectivity filter part_3 motif; the sequence is GGFMP. Positions 483–498 form an intramembrane region, helical; the sequence is GFMPVFVLGAAFGRLV. Chloride is bound at residue Phe484. The Extracellular segment spans residues 499–521; the sequence is GEIMAMLFPEGILFDDIIYKILP. The segment at residues 522–538 is an intramembrane region (helical); sequence GGYAVIGAAALTGAVSH. Residues 539–540 constitute an intramembrane region (note=Loop between two helices); it reads TV. An intramembrane region (helical) is located at residues 541 to 554; that stretch reads STAVICFELTGQIA. Residues 555 to 557 are Extracellular-facing; sequence HIL. Residues 558-571 constitute an intramembrane region (helical); the sequence is PMMVAVILANMVAQ. The segment at residues 572–575 is an intramembrane region (note=Loop between two helices); it reads SLQP. The segment at residues 576–578 is an intramembrane region (helical); the sequence is SLY. Tyr578 is a binding site for chloride. The Cytoplasmic portion of the chain corresponds to 579–994; sequence DSIIQVKKLP…DEEDEDELIL (416 aa). The CBS 1 domain occupies 609–668; it reads MVRDVKFVSASCTYGELRNLLQTTTVKTLPLVDSKDSMILLGSVERSELQSLLQRHLCAE. 3 disordered regions span residues 710 to 769, 880 to 923, and 965 to 994; these read EDED…SADQ, TKSG…DGAP, and NLGP…ELIL. Residues 725–741 are compositionally biased toward pro residues; sequence TPTPPPPPPPPLPPQFP. The CBS 2 domain maps to 827-882; sequence IDQSPFQLVEQTTLHKTHTLFSLLGLHLAYVTSMGKLRGVLALEELQKAIKGHTKS. The residue at position 892 (Ser892) is a Phosphoserine. Over residues 985–994 the composition is skewed to acidic residues; it reads DEEDEDELIL.

Belongs to the chloride channel (TC 2.A.49) family. ClC-1/CLCN1 subfamily. As to quaternary structure, homodimer. Predominantly expressed in skeletal muscles.

It is found in the cell membrane. It localises to the sarcolemma. The protein localises to the T-tubule. It carries out the reaction chloride(in) = chloride(out). The enzyme catalyses bromide(in) = bromide(out). The catalysed reaction is iodide(out) = iodide(in). It catalyses the reaction thiocyanate(in) = thiocyanate(out). It carries out the reaction nitrate(in) = nitrate(out). Its activity is regulated as follows. Modulated by membrane voltage with depolarization favouring channel opening and hyperpolarization favouring channel closure. Inhibited by acidic pH and ATP binding due to a shift of voltage dependence of common gating to more positive voltages. Inhibited by 9-anthracene-carboxylic acid. Functionally, voltage-gated chloride channel involved in skeletal muscle excitability. Generates most of the plasma membrane chloride conductance in skeletal muscle fibers, stabilizes the resting membrane potential and contributes to the repolarization phase during action potential firing. Forms a homodimeric channel where each subunit has its own ion conduction pathway. Conducts double-barreled currents controlled by two types of gates, two fast glutamate gates that control each subunit independently and a slow common gate that opens and shuts off both subunits simultaneously. Has a significant open probability at muscle resting potential and is further activated upon membrane depolarization. Permeable to small monovalent anions with ion selectivity for chloride &gt; thiocyanate &gt; bromide &gt; nitrate &gt; iodide. The protein is Chloride channel protein 1 (Clcn1) of Rattus norvegicus (Rat).